A 435-amino-acid polypeptide reads, in one-letter code: Nucleoredoxin (435 aa).

The residue at position 2 (serine 2) is an N-acetylserine. Positions proline 167–alanine 321 constitute a Thioredoxin domain.

It belongs to the nucleoredoxin family. As to quaternary structure, associates with the phosphatase 2A holoenzyme. Interacts with PPP2CA; the interaction is direct. Interacts with DVL1 (via PDZ domain); the interaction is direct and regulated by oxidative stress.

It is found in the cytoplasm. The protein resides in the cytosol. Its subcellular location is the nucleus. The catalysed reaction is [protein]-dithiol + NAD(+) = [protein]-disulfide + NADH + H(+). It carries out the reaction [protein]-dithiol + NADP(+) = [protein]-disulfide + NADPH + H(+). Functionally, functions as a redox-dependent negative regulator of the Wnt signaling pathway, possibly by preventing ubiquitination of DVL3 by the BCR(KLHL12) complex. May also function as a transcriptional regulator act as a regulator of protein phosphatase 2A (PP2A). The protein is Nucleoredoxin (NXN) of Homo sapiens (Human).